The chain runs to 181 residues: Inner membrane-spanning protein YciB (181 aa).

A run of 5 helical transmembrane segments spans residues 19–39 (FFDI…QLIA), 50–70 (MHLI…IFHD), 80–100 (IVYA…KPIL), 118–138 (LTWY…YVAF), and 148–168 (FKVF…VVYL).

The protein belongs to the YciB family.

The protein resides in the cell inner membrane. Plays a role in cell envelope biogenesis, maintenance of cell envelope integrity and membrane homeostasis. This Shewanella amazonensis (strain ATCC BAA-1098 / SB2B) protein is Inner membrane-spanning protein YciB.